Consider the following 62-residue polypeptide: Large ribosomal subunit protein eL24 (62 aa).

Zn(2+)-binding residues include C7, C10, C33, and C37. A C4-type zinc finger spans residues 7–37; the sequence is CSFCGREIEPGTGIMYVKNDGSILWFCSRKC.

Belongs to the eukaryotic ribosomal protein eL24 family. Part of the 50S ribosomal subunit. Forms a cluster with proteins L3 and L14. The cofactor is Zn(2+).

Functionally, binds to the 23S rRNA. In Staphylothermus marinus (strain ATCC 43588 / DSM 3639 / JCM 9404 / F1), this protein is Large ribosomal subunit protein eL24.